The chain runs to 231 residues: FFQWSATVECHFLNGTERVRFLVRHVYNRQQYVHFDSDVGLFVADTVLGEPSAKLFNSQPDVLEKNRAAVEMLCNYNYEIVAPLTLQRREPKVRIFALQSGSLPQTDRLACYVTGFYPPEIEVKWFQNGQEETERVVSTDVIQNGDWTYQVLVVLEISPRHGDSYVCQVEHTSLQQPITQRWEPPGDVSRSKLLMGVGGFVLGLVYLALGIFFFLCSKKGQPDPTSPGILN.

Residues 1–89 form a beta-1 region; sequence FFQWSATVEC…IVAPLTLQRR (89 aa). Over 1 to 194 the chain is Extracellular; the sequence is FFQWSATVEC…PGDVSRSKLL (194 aa). Disulfide bonds link C10–C74 and C111–C167. N14 is a glycosylation site (N-linked (GlcNAc...) asparagine). The beta-2 stretch occupies residues 90–182; it reads EPKVRIFALQ…SLQQPITQRW (93 aa). An Ig-like C1-type domain is found at 91-179; sequence PKVRIFALQS…EHTSLQQPIT (89 aa). The segment at 183 to 194 is connecting peptide; sequence EPPGDVSRSKLL. Residues 195–219 form a helical membrane-spanning segment; it reads MGVGGFVLGLVYLALGIFFFLCSKK. Residues 220–231 are Cytoplasmic-facing; the sequence is GQPDPTSPGILN.

It belongs to the MHC class II family.

It localises to the membrane. This Gallus gallus (Chicken) protein is Class II histocompatibility antigen, B-L beta chain.